We begin with the raw amino-acid sequence, 892 residues long: Alanine--tRNA ligase (892 aa).

Zn(2+) contacts are provided by His-577, His-581, Cys-680, and His-684.

Belongs to the class-II aminoacyl-tRNA synthetase family. Requires Zn(2+) as cofactor.

The protein localises to the cytoplasm. It catalyses the reaction tRNA(Ala) + L-alanine + ATP = L-alanyl-tRNA(Ala) + AMP + diphosphate. Its function is as follows. Catalyzes the attachment of alanine to tRNA(Ala) in a two-step reaction: alanine is first activated by ATP to form Ala-AMP and then transferred to the acceptor end of tRNA(Ala). Also edits incorrectly charged Ser-tRNA(Ala) and Gly-tRNA(Ala) via its editing domain. This chain is Alanine--tRNA ligase, found in Paenarthrobacter aurescens (strain TC1).